The chain runs to 121 residues: Large ribosomal subunit protein eL18 (121 aa).

This sequence belongs to the eukaryotic ribosomal protein eL18 family.

In Methanocaldococcus jannaschii (strain ATCC 43067 / DSM 2661 / JAL-1 / JCM 10045 / NBRC 100440) (Methanococcus jannaschii), this protein is Large ribosomal subunit protein eL18.